The sequence spans 183 residues: Oleosin 5 (183 aa).

The polar stretch occupies residues 1–39; the sequence is MADVRTHSHQLQVHPQRQHEGGIKVLYPQSGPSSTQVLA. The next 3 helical transmembrane spans lie at 37-57, 66-86, and 87-107; these read VLAV…AGLT, MLAF…AFVI, and GLAM…LSSM. Residues 40–113 form a hydrophobic region; sequence VFVGVPIGGT…LSSMSWVLNY (74 aa). A disordered region spans residues 144–183; it reads KDAGQTIEDKAHDVREAKTFDVRDRDTTKGTHNVRDTKTT.

Belongs to the oleosin family.

Its subcellular location is the lipid droplet. The protein localises to the membrane. Functionally, may have a structural role to stabilize the lipid body during desiccation of the seed by preventing coalescence of the oil. Probably interacts with both lipid and phospholipid moieties of lipid bodies. May also provide recognition signals for specific lipase anchorage in lipolysis during seedling growth. This is Oleosin 5 from Arabidopsis thaliana (Mouse-ear cress).